The chain runs to 364 residues: Chaperone protein DnaJ (364 aa).

The J domain maps to 4–69; it reads DYYEILGLSK…NKKAKYDRFG (66 aa). Residues 135–213 form a CR-type zinc finger; sequence GYKNNINITR…CKGKGRITNQ (79 aa). Positions 148, 151, 165, 168, 187, 190, 201, and 204 each coordinate Zn(2+). CXXCXGXG motif repeat units follow at residues 148 to 155, 165 to 172, 187 to 194, and 201 to 208; these read CHSCLGKK, CNMCNGSG, CSKCYGEG, and CKSCKGKG.

It belongs to the DnaJ family. Homodimer. The cofactor is Zn(2+).

It is found in the cytoplasm. Functionally, participates actively in the response to hyperosmotic and heat shock by preventing the aggregation of stress-denatured proteins and by disaggregating proteins, also in an autonomous, DnaK-independent fashion. Unfolded proteins bind initially to DnaJ; upon interaction with the DnaJ-bound protein, DnaK hydrolyzes its bound ATP, resulting in the formation of a stable complex. GrpE releases ADP from DnaK; ATP binding to DnaK triggers the release of the substrate protein, thus completing the reaction cycle. Several rounds of ATP-dependent interactions between DnaJ, DnaK and GrpE are required for fully efficient folding. Also involved, together with DnaK and GrpE, in the DNA replication of plasmids through activation of initiation proteins. This Borrelia garinii subsp. bavariensis (strain ATCC BAA-2496 / DSM 23469 / PBi) (Borreliella bavariensis) protein is Chaperone protein DnaJ.